Here is an 82-residue protein sequence, read N- to C-terminus: Delta-ctenitoxin-Pn2a (82 aa).

An N-terminal signal peptide occupies residues 1 to 17 (MKVAILFLSILVLAVAS). Positions 18–34 (ESIEESRDDFAVEELGR) are excised as a propeptide. Cystine bridges form between cysteine 37/cysteine 51, cysteine 44/cysteine 57, cysteine 48/cysteine 80, cysteine 50/cysteine 65, and cysteine 59/cysteine 63.

It belongs to the neurotoxin 03 (Tx2) family. 06 subfamily. As to expression, expressed by the venom gland.

Its subcellular location is the secreted. Functionally, toxin that is known to potentiate erectile function. It binds voltage-dependently to sodium channels (Nav), inhibits the inactivation of the activated channels and decreases the peak inward current. The toxin delays inactivation of Nav1.2/SCN2A, Nav1.3/SCN3A, Nav1.4/SCN4A and Nav1.8/SCN10A, slows the inactivation process and decreases the sodium peak amplitude of Nav1.5/SCN5A and Nav1.6/SCN8A. In vivo, it enhances erectile function by inducing the release of nictric oxide (NO): it slows the sodium current, leading to depolarization, which leads to an increase in calcium influx (probably via activation of N-type calcium channels) which in turn activates neuronal NO synthase (nNOS/NOS1), inducing nitric oxide (NO) production. In a final step, NO activates soluble guanylate cyclase (GUCY1A1/GUCY1B1) which in turn increases cGMP formation, resulting in penile erection. It is noteworthy that the toxin does not provoke erection by inhibiting phosphodiesterase type 5 (PDE5A), an enzyme that hydrolysis cGMP. In vivo, it also causes scratching, lacrimation, hypersalivation, sweating and agitation followed by spastic paralysis of the anterior and posterior extremities and death at dose levels of 0.79 mg/mouse. It is insecticidal to the larval and adult forms of the house fly. The toxin also improves cavernosal relaxation in different models where erectile dysfunction is observed, such as deoxycorticosterone-acetate (DOCA)-salt hypertensive rats, mice models for type-1 diabetes, as well as elderly rats. The protein is Delta-ctenitoxin-Pn2a of Phoneutria nigriventer (Brazilian armed spider).